Consider the following 272-residue polypeptide: 2-amino-3,7-dideoxy-D-threo-hept-6-ulosonate synthase (272 aa).

D33 serves as the catalytic Proton acceptor. 1-deoxy-D-threo-hexo-2,5-diulose 6-phosphate-binding positions include 33–37 and 153–155; these read DHGVS and YPR. Y153 functions as the Proton donor in the catalytic mechanism. The active-site Schiff-base intermediate with substrate is K184. 1-deoxy-D-threo-hexo-2,5-diulose 6-phosphate contacts are provided by residues 209–210 and 237–238; these read GG and GR.

Belongs to the DeoC/FbaB aldolase family. ADHS subfamily. In terms of assembly, homodecamer.

The enzyme catalyses 1-deoxy-D-threo-hexo-2,5-diulose 6-phosphate + L-aspartate 4-semialdehyde = 2,3-dioxopropyl phosphate + 2-amino-2,3,7-trideoxy-D-lyxo-hept-6-ulosonate. Its function is as follows. Catalyzes a transaldol reaction between 6-deoxy-5-ketofructose 1-phosphate (DKFP) and L-aspartate semialdehyde (ASA) with an elimination of hydroxypyruvaldehyde phosphate to yield 2-amino-3,7-dideoxy-D-threo-hept-6-ulosonate (ADH). Plays a key role in an alternative pathway of the biosynthesis of 3-dehydroquinate (DHQ), which is involved in the canonical pathway for the biosynthesis of aromatic amino acids. This chain is 2-amino-3,7-dideoxy-D-threo-hept-6-ulosonate synthase, found in Methanococcus maripaludis (strain C7 / ATCC BAA-1331).